The sequence spans 565 residues: Ubiquitin carboxyl-terminal hydrolase 21 (565 aa).

Basic and acidic residues-rich tracts occupy residues 1-14 (MPQA…RTRE) and 58-70 (PPDE…DLGR). Positions 1-128 (MPQASEHRLG…LRPMGIALGG (128 aa)) are disordered. A compositionally biased stretch (low complexity) spans 71 to 81 (GRTSGSRPRGP). A compositionally biased stretch (polar residues) spans 104 to 116 (SRTNLTRSKSVSS). A Nuclear export signal motif is present at residues 134–152 (ELGAALSRLALRPEPPTLR). One can recognise a USP domain in the interval 212-558 (VGLRNLGNTC…EGYVLFYQLM (347 aa)). The Nucleophile role is filled by Cys221. Residues 324–347 (APPILASGPVPSPPRRGGALHEEP) are disordered. Zn(2+) contacts are provided by Cys384, Cys387, Cys437, and Cys440. His518 (proton acceptor) is an active-site residue.

It belongs to the peptidase C19 family. USP21 subfamily. As to quaternary structure, interacts with BEND3.

It is found in the cytoplasm. The protein localises to the nucleus. The catalysed reaction is Thiol-dependent hydrolysis of ester, thioester, amide, peptide and isopeptide bonds formed by the C-terminal Gly of ubiquitin (a 76-residue protein attached to proteins as an intracellular targeting signal).. Deubiquitinates histone H2A, a specific tag for epigenetic transcriptional repression, thereby acting as a coactivator. Deubiquitination of histone H2A releaves the repression of di- and trimethylation of histone H3 at 'Lys-4', resulting in regulation of transcriptional initiation. Regulates gene expression via histone H2A deubiquitination. Deubiquitinates BAZ2A/TIP5 leading to its stabilization. Also capable of removing NEDD8 from NEDD8 conjugates but has no effect on Sentrin-1 conjugates. Also acts as a negative regulator of the ribosome quality control (RQC) by mediating deubiquitination of 40S ribosomal proteins RPS10/eS10 and RPS20/uS10, thereby antagonizing ZNF598-mediated 40S ubiquitination. The sequence is that of Ubiquitin carboxyl-terminal hydrolase 21 (Usp21) from Rattus norvegicus (Rat).